A 196-amino-acid polypeptide reads, in one-letter code: Small ribosomal subunit protein uS4c (196 aa).

Residues 15–36 are disordered; the sequence is LGTLPGLTSKRPRSGSDLKNPL. An S4 RNA-binding domain is found at 89 to 150; sequence MRLDNILFRL…KQRSKALIQN (62 aa).

It belongs to the universal ribosomal protein uS4 family. In terms of assembly, part of the 30S ribosomal subunit. Contacts protein S5. The interaction surface between S4 and S5 is involved in control of translational fidelity.

The protein localises to the plastid. The protein resides in the chloroplast. One of the primary rRNA binding proteins, it binds directly to 16S rRNA where it nucleates assembly of the body of the 30S subunit. Its function is as follows. With S5 and S12 plays an important role in translational accuracy. In Yucca filamentosa (Bear-grass), this protein is Small ribosomal subunit protein uS4c (rps4).